We begin with the raw amino-acid sequence, 588 residues long: Sulfite reductase [NADPH] hemoprotein beta-component (588 aa).

Residues 1-10 (MSDKKQKGLE) show a composition bias toward basic and acidic residues. Residues 1–20 (MSDKKQKGLEWQDNPLSDNE) form a disordered region. 4 residues coordinate [4Fe-4S] cluster: Cys-443, Cys-449, Cys-488, and Cys-492. Siroheme is bound at residue Cys-492.

Belongs to the nitrite and sulfite reductase 4Fe-4S domain family. In terms of assembly, alpha(8)-beta(8). The alpha component is a flavoprotein, the beta component is a hemoprotein. The cofactor is siroheme. It depends on [4Fe-4S] cluster as a cofactor.

It catalyses the reaction hydrogen sulfide + 3 NADP(+) + 3 H2O = sulfite + 3 NADPH + 4 H(+). Its pathway is sulfur metabolism; hydrogen sulfide biosynthesis; hydrogen sulfide from sulfite (NADPH route): step 1/1. In terms of biological role, component of the sulfite reductase complex that catalyzes the 6-electron reduction of sulfite to sulfide. This is one of several activities required for the biosynthesis of L-cysteine from sulfate. The polypeptide is Sulfite reductase [NADPH] hemoprotein beta-component (Mannheimia succiniciproducens (strain KCTC 0769BP / MBEL55E)).